Here is a 671-residue protein sequence, read N- to C-terminus: ABC transporter ATP-binding protein/permease wht-1 (671 aa).

Topologically, residues 1 to 408 (MHKAPISTLI…SWLTVIRDPN (408 aa)) are cytoplasmic. Residues 64-310 (TNFVDRFRNN…FEKCGYPCPA (247 aa)) enclose the ABC transporter domain. Residue 100–107 (GSSGAGKT) coordinates ATP. A helical membrane pass occupies residues 409–429 (LLSVRLLQILITAFITGIVFF). The Extracellular portion of the chain corresponds to 430 to 451 (QTPVTPATIISINGIMFNHIRN). A helical membrane pass occupies residues 452-472 (MNFMLQFPNVPVITAELPIVL). The Cytoplasmic portion of the chain corresponds to 473 to 497 (RENANGVYRTSAYFLAKNIAELPQY). Residues 498 to 518 (IILPILYNTIVYWMSGLYPNF) traverse the membrane as a helical segment. The Extracellular segment spans residues 519-525 (WNYCFAS). A helical membrane pass occupies residues 526–546 (LVTILITNVAISISYAVATIF). At 547 to 550 (ANTD) the chain is on the cytoplasmic side. Residues 551–571 (VAMTILPIFVVPIMAFGGFFI) form a helical membrane-spanning segment. At 572–644 (TFDAIPSYFK…DFSASHKIFD (73 aa)) the chain is on the extracellular side. A helical transmembrane segment spans residues 645–665 (ISILFGMFIGIRIIAYVALLI). The Cytoplasmic segment spans residues 666 to 671 (RSYNNT).

This sequence belongs to the ABC transporter superfamily. ABCG family. Eye pigment precursor importer (TC 3.A.1.204) subfamily. In terms of tissue distribution, expressed in the intestine in both larvae and adults. Expressed in the gut of males.

It is found in the membrane. Required for efficient RNA interference (RNAi). Plays a role in germline development. The protein is ABC transporter ATP-binding protein/permease wht-1 of Caenorhabditis elegans.